A 430-amino-acid polypeptide reads, in one-letter code: Protein arginine methyltransferase NDUFAF7, mitochondrial (430 aa).

A mitochondrion-targeting transit peptide spans 1–31; sequence MSGLARLRKTAFLMVSASANCRIQRYQSSRT.

This sequence belongs to the NDUFAF7 family.

Its subcellular location is the mitochondrion. The enzyme catalyses L-arginyl-[protein] + 2 S-adenosyl-L-methionine = N(omega),N(omega)'-dimethyl-L-arginyl-[protein] + 2 S-adenosyl-L-homocysteine + 2 H(+). Arginine methyltransferase involved in the assembly or stability of mitochondrial NADH:ubiquinone oxidoreductase complex (complex I). Acts by mediating symmetric dimethylation of 'Arg-118' of ndufs2 after it assembles into the complex I, stabilizing the early intermediate complex. The chain is Protein arginine methyltransferase NDUFAF7, mitochondrial from Xenopus tropicalis (Western clawed frog).